A 358-amino-acid chain; its full sequence is Trace amine-associated receptor 7d (358 aa).

At 1-47 (MATGDDSFPWDQDSILSRDLFSATSTELCYENLNRSCVRSPYSPGPR) the chain is on the extracellular side. N-linked (GlcNAc...) asparagine glycosylation is present at asparagine 34. 2 disulfide bridges follow: cysteine 37/cysteine 201 and cysteine 120/cysteine 205. Residues 48 to 68 (LILYAVFGFGAVLAVCGNLLV) form a helical membrane-spanning segment. Over 69 to 83 (MTSILHFRQLHSPAN) the chain is Cytoplasmic. Residues 84–104 (FLVASLACADFLVGVMVMPFS) form a helical membrane-spanning segment. The Extracellular portion of the chain corresponds to 105–121 (MVRSVEGCWYFGESYCK). Residues 122–143 (FHSCFEGSFCYSSLFHLCFISV) traverse the membrane as a helical segment. The Cytoplasmic portion of the chain corresponds to 144-166 (DRYIAVSDPLTYPTRFTASVSGK). Residues 167 to 187 (CITFSWLLSIIYSFSLLYTGA) traverse the membrane as a helical segment. At 188 to 212 (NDAGLEDLVSALTCVGGCQIAVNQT) the chain is on the extracellular side. Asparagine 210 carries an N-linked (GlcNAc...) asparagine glycan. Residues 213-233 (WVFINFLLFLIPTLVMITVYS) form a helical membrane-spanning segment. Residues 234–274 (KIFLIAKQQAQNIEKMSKQTARASESYKDRVTKRERKAAKT) lie on the Cytoplasmic side of the membrane. Residues 275-295 (LGIAVAAFLLSWLPYFIDSII) form a helical membrane-spanning segment. Residues 296 to 309 (DAFLGFITPTYVYE) are Extracellular-facing. A helical membrane pass occupies residues 310 to 333 (ILVWIVYYNSAMNPLIYAFFYSWF). At 334 to 358 (RKAIKLIVSGKILRENSSTTNLFPE) the chain is on the cytoplasmic side.

The protein belongs to the G-protein coupled receptor 1 family. Specifically expressed in neurons of the olfactory epithelium.

The protein localises to the cell membrane. In terms of biological role, olfactory receptor specific for trace amines, such as beta-phenylethylamine (beta-PEA). Trace amine compounds are enriched in animal body fluids and act on trace amine-associated receptors (TAARs) to elicit both intraspecific and interspecific innate behaviors. Ligand-binding causes a conformation change that triggers signaling via G(s)-class of G alpha proteins (GNAL or GNAS). In Mus musculus (Mouse), this protein is Trace amine-associated receptor 7d.